The sequence spans 299 residues: MHFPIVALIGRYQDTGLDAPLRALAAMLTQAGRRVLVDADTARNTAVHEYPVATMQEIGESASLAVVMGGDGTVLGVARHLAPYGVPLIGINHGRLGFITDIPLQDAHDALARVLDGNFQIEERMLLQGSVWRGDALMYTASALNDVVLNRAGRGGMIEMRVELDGVYMYTQRADGLIIATPTGSTAYALSANGPLLHPGLNAMVLVPVAPQSLSNRPIVIPDTGVLNMTLTAIGRVETGASAHFDMQTWSDLQLGDRITVQRAPHTARLVHPQGYSFFSTLRRKLHWNQMPQVSDNIE.

Asp-71 (proton acceptor) is an active-site residue. NAD(+) contacts are provided by residues Asp-71–Gly-72, Asn-145–Asp-146, Arg-173, Asp-175, Thr-186–Ser-191, Ala-210, and Gln-248.

Belongs to the NAD kinase family. The cofactor is a divalent metal cation.

It is found in the cytoplasm. It catalyses the reaction NAD(+) + ATP = ADP + NADP(+) + H(+). Involved in the regulation of the intracellular balance of NAD and NADP, and is a key enzyme in the biosynthesis of NADP. Catalyzes specifically the phosphorylation on 2'-hydroxyl of the adenosine moiety of NAD to yield NADP. The chain is NAD kinase from Bordetella avium (strain 197N).